A 338-amino-acid chain; its full sequence is Fructose-1,6-bisphosphatase 1 (338 aa).

T2 is modified (N-acetylthreonine). Residues 18–22 (VMEEG) and 28–32 (TGEMT) each bind AMP. The Mg(2+) site is built by D69 and E98. 113 to 114 (KY) is an AMP binding site. Mg(2+) is bound by residues D119, L121, and D122. Substrate is bound at residue 122 to 125 (DGSS). R141 is a binding site for AMP. Position 151 is an N6-succinyllysine (K151). S208 carries the post-translational modification Phosphoserine; by PKA. Substrate contacts are provided by residues 213-216 (NEGY), 244-249 (RYVGSM), Y265, and 275-277 (KLR). Phosphotyrosine is present on residues Y216, Y245, and Y265. E281 contributes to the Mg(2+) binding site.

Belongs to the FBPase class 1 family. In terms of assembly, homotetramer. Requires Mg(2+) as cofactor.

The catalysed reaction is beta-D-fructose 1,6-bisphosphate + H2O = beta-D-fructose 6-phosphate + phosphate. It participates in carbohydrate biosynthesis; gluconeogenesis. Subject to complex allosteric regulation. The enzyme can assume an active R-state, or an inactive T-state. Intermediate conformations may exist. AMP acts as an allosteric inhibitor. AMP binding affects the turnover of bound substrate and not the affinity for substrate. Fructose 2,6-bisphosphate acts as a competitive inhibitor. Fructose 2,6-bisphosphate and AMP have synergistic effects. Its function is as follows. Catalyzes the hydrolysis of fructose 1,6-bisphosphate to fructose 6-phosphate in the presence of divalent cations, acting as a rate-limiting enzyme in gluconeogenesis. Plays a role in regulating glucose sensing and insulin secretion of pancreatic beta-cells. Appears to modulate glycerol gluconeogenesis in liver. Important regulator of appetite and adiposity; increased expression of the protein in liver after nutrient excess increases circulating satiety hormones and reduces appetite-stimulating neuropeptides and thus seems to provide a feedback mechanism to limit weight gain. The sequence is that of Fructose-1,6-bisphosphatase 1 (FBP1) from Sus scrofa (Pig).